Reading from the N-terminus, the 296-residue chain is MNKEQLEKMTHGKGFIAALDQSGGSTPKALKEYGVNEDQYSNEDEMFQLVHDMRTRVVTSPSFSPDKILGAILFEQTMDREVEGKYTGDYLADKGVVPFLKVDKGLAEEKNGVQLMKPIDDLDATLNRANERHIFGTKMRSNILELNEQGIKDVVEQQFEFAKKIIAKGLVPIIEPEVNINAKDKSEIEKVLKAEIKKGLDSLNDDQLVMLKLTIPTEANLYKDLADHPNVVRVVVLSGGYSRDEANKLLKDNDELIASFSRALASDLRASQSQEEFDKALGDAVDSIYDASVNKN.

Glu-175 acts as the Proton acceptor in catalysis. The active-site Schiff-base intermediate with dihydroxyacetone-P is Lys-212.

Belongs to the class I fructose-bisphosphate aldolase family.

It catalyses the reaction beta-D-fructose 1,6-bisphosphate = D-glyceraldehyde 3-phosphate + dihydroxyacetone phosphate. The protein operates within carbohydrate degradation; glycolysis; D-glyceraldehyde 3-phosphate and glycerone phosphate from D-glucose: step 4/4. The polypeptide is Fructose-bisphosphate aldolase class 1 (Staphylococcus epidermidis (strain ATCC 35984 / DSM 28319 / BCRC 17069 / CCUG 31568 / BM 3577 / RP62A)).